A 452-amino-acid polypeptide reads, in one-letter code: Bifunctional protein GlmU (452 aa).

Residues 1–231 form a pyrophosphorylase region; that stretch reads MSRTCLAVIL…EAELAGCNNR (231 aa). UDP-N-acetyl-alpha-D-glucosamine contacts are provided by residues 10 to 13, K24, Q77, 82 to 83, 105 to 107, G143, E157, N172, and N229; these read LAAG, GT, and YGD. D107 is a binding site for Mg(2+). N229 provides a ligand contact to Mg(2+). A linker region spans residues 232–252; it reads AELAVIEKLWQERRRHELMLS. Residues 253–452 are N-acetyltransferase; the sequence is GVSMIAPETV…MAIKAFSGKV (200 aa). UDP-N-acetyl-alpha-D-glucosamine contacts are provided by R318 and K336. H348 serves as the catalytic Proton acceptor. The UDP-N-acetyl-alpha-D-glucosamine site is built by Y351 and N362. Residues A365, 371–372, S390, S408, and R425 each bind acetyl-CoA; that span reads NY.

The protein in the N-terminal section; belongs to the N-acetylglucosamine-1-phosphate uridyltransferase family. This sequence in the C-terminal section; belongs to the transferase hexapeptide repeat family. As to quaternary structure, homotrimer. Requires Mg(2+) as cofactor.

The protein localises to the cytoplasm. It carries out the reaction alpha-D-glucosamine 1-phosphate + acetyl-CoA = N-acetyl-alpha-D-glucosamine 1-phosphate + CoA + H(+). The catalysed reaction is N-acetyl-alpha-D-glucosamine 1-phosphate + UTP + H(+) = UDP-N-acetyl-alpha-D-glucosamine + diphosphate. It participates in nucleotide-sugar biosynthesis; UDP-N-acetyl-alpha-D-glucosamine biosynthesis; N-acetyl-alpha-D-glucosamine 1-phosphate from alpha-D-glucosamine 6-phosphate (route II): step 2/2. The protein operates within nucleotide-sugar biosynthesis; UDP-N-acetyl-alpha-D-glucosamine biosynthesis; UDP-N-acetyl-alpha-D-glucosamine from N-acetyl-alpha-D-glucosamine 1-phosphate: step 1/1. It functions in the pathway bacterial outer membrane biogenesis; LPS lipid A biosynthesis. Functionally, catalyzes the last two sequential reactions in the de novo biosynthetic pathway for UDP-N-acetylglucosamine (UDP-GlcNAc). The C-terminal domain catalyzes the transfer of acetyl group from acetyl coenzyme A to glucosamine-1-phosphate (GlcN-1-P) to produce N-acetylglucosamine-1-phosphate (GlcNAc-1-P), which is converted into UDP-GlcNAc by the transfer of uridine 5-monophosphate (from uridine 5-triphosphate), a reaction catalyzed by the N-terminal domain. The chain is Bifunctional protein GlmU from Allorhizobium ampelinum (strain ATCC BAA-846 / DSM 112012 / S4) (Agrobacterium vitis (strain S4)).